Reading from the N-terminus, the 186-residue chain is UPF0301 protein Tgr7_2910 (186 aa).

This sequence belongs to the UPF0301 (AlgH) family.

The protein is UPF0301 protein Tgr7_2910 of Thioalkalivibrio sulfidiphilus (strain HL-EbGR7).